The sequence spans 350 residues: RNA 3'-terminal phosphate cyclase (350 aa).

Residues Gln-100 and 290–294 contribute to the ATP site; that span reads FLGDQ. His-314 (tele-AMP-histidine intermediate) is an active-site residue.

It belongs to the RNA 3'-terminal cyclase family. Type 1 subfamily.

The protein localises to the cytoplasm. The catalysed reaction is a 3'-end 3'-phospho-ribonucleotide-RNA + ATP = a 3'-end 2',3'-cyclophospho-ribonucleotide-RNA + AMP + diphosphate. Catalyzes the conversion of 3'-phosphate to a 2',3'-cyclic phosphodiester at the end of RNA. The mechanism of action of the enzyme occurs in 3 steps: (A) adenylation of the enzyme by ATP; (B) transfer of adenylate to an RNA-N3'P to produce RNA-N3'PP5'A; (C) and attack of the adjacent 2'-hydroxyl on the 3'-phosphorus in the diester linkage to produce the cyclic end product. The biological role of this enzyme is unknown but it is likely to function in some aspects of cellular RNA processing. The protein is RNA 3'-terminal phosphate cyclase of Thermococcus sibiricus (strain DSM 12597 / MM 739).